The primary structure comprises 237 residues: Proteasome subunit alpha type-5 (237 aa).

It belongs to the peptidase T1A family. As to quaternary structure, the 26S proteasome consists of a 20S proteasome core and two 19S regulatory subunits. The 20S proteasome core is composed of 28 subunits that are arranged in four stacked rings, resulting in a barrel-shaped structure. The two end rings are each formed by seven alpha subunits, and the two central rings are each formed by seven beta subunits. The catalytic chamber with the active sites is on the inside of the barrel.

The protein localises to the cytoplasm. It localises to the nucleus. Its function is as follows. The proteasome is a multicatalytic proteinase complex which is characterized by its ability to cleave peptides with Arg, Phe, Tyr, Leu, and Glu adjacent to the leaving group at neutral or slightly basic pH. The proteasome has an ATP-dependent proteolytic activity. In Oryza sativa subsp. japonica (Rice), this protein is Proteasome subunit alpha type-5 (PAE1).